The chain runs to 611 residues: Alpha-1,2-mannosyltransferase ALG9 (611 aa).

Positions Met-1–Leu-10 are enriched in basic residues. The tract at residues Met-1 to Ala-23 is disordered. Residues Met-1–Lys-135 lie on the Lumenal side of the membrane. The N-linked (GlcNAc...) asparagine glycan is linked to Asn-77. The chain crosses the membrane as a helical span at residues Ile-136–Tyr-156. Topologically, residues Phe-157–Arg-171 are cytoplasmic. A helical transmembrane segment spans residues Met-172–Pro-192. The Lumenal portion of the chain corresponds to Ser-193–Ser-213. Residues Ile-214–Gly-234 traverse the membrane as a helical segment. Residues Leu-235 to Lys-249 lie on the Cytoplasmic side of the membrane. The helical transmembrane segment at Ser-250 to Asp-270 threads the bilayer. At Ser-271–Tyr-304 the chain is on the lumenal side. Residues Phe-305–Leu-325 form a helical membrane-spanning segment. Topologically, residues Pro-326–Asn-342 are cytoplasmic. The helical transmembrane segment at Leu-343 to Ile-363 threads the bilayer. Residues Gln-364–Arg-370 lie on the Lumenal side of the membrane. Residues Phe-371 to Gln-391 traverse the membrane as a helical segment. The Cytoplasmic segment spans residues Lys-392 to His-405. A helical transmembrane segment spans residues Tyr-406–Phe-426. Residues Ser-427 to Gly-611 are Lumenal-facing. Asn-593 is a glycosylation site (N-linked (GlcNAc...) asparagine).

It belongs to the glycosyltransferase 22 family. Ubiquitously expressed; with highest levels in heart, liver and pancreas.

It is found in the endoplasmic reticulum membrane. It catalyses the reaction an alpha-D-Man-(1-&gt;2)-alpha-D-Man-(1-&gt;2)-alpha-D-Man-(1-&gt;3)-[alpha-D-Man-(1-&gt;3)-alpha-D-Man-(1-&gt;6)]-beta-D-Man-(1-&gt;4)-beta-D-GlcNAc-(1-&gt;4)-alpha-D-GlcNAc-diphospho-di-trans,poly-cis-dolichol + a di-trans,poly-cis-dolichyl beta-D-mannosyl phosphate = an alpha-D-Man-(1-&gt;2)-alpha-D-Man-(1-&gt;2)-alpha-D-Man-(1-&gt;3)-[alpha-D-Man-(1-&gt;2)-alpha-D-Man-(1-&gt;3)-alpha-D-Man-(1-&gt;6)]-beta-D-Man-(1-&gt;4)-beta-D-GlcNAc-(1-&gt;4)-alpha-D-GlcNAc-diphospho-di-trans,poly-cis-dolichol + a di-trans,poly-cis-dolichyl phosphate + H(+). The catalysed reaction is an alpha-D-Man-(1-&gt;2)-alpha-D-Man-(1-&gt;2)-alpha-D-Man-(1-&gt;3)-[alpha-D-Man-(1-&gt;2)-alpha-D-Man-(1-&gt;3)-[alpha-D-Man-(1-&gt;6)]-alpha-D-Man-(1-&gt;6)]-beta-D-Man-(1-&gt;4)-beta-D-GlcNAc-(1-&gt;4)-alpha-D-GlcNAc-diphospho-di-trans,poly-cis-dolichol + a di-trans,poly-cis-dolichyl beta-D-mannosyl phosphate = an alpha-D-Man-(1-&gt;2)-alpha-D-Man-(1-&gt;2)-alpha-D-Man-(1-&gt;3)-[alpha-D-Man-(1-&gt;2)-alpha-D-Man-(1-&gt;3)-[alpha-D-Man-(1-&gt;2)-alpha-D-Man-(1-&gt;6)]-alpha-D-Man-(1-&gt;6)]-beta-D-Man-(1-&gt;4)-beta-D-GlcNAc-(1-&gt;4)-alpha-D-GlcNAc-diphospho-di-trans,poly-cis-dolichol + a di-trans,poly-cis-dolichyl phosphate + H(+). It participates in protein modification; protein glycosylation. In terms of biological role, mannosyltransferase that operates in the biosynthetic pathway of dolichol-linked oligosaccharides, the glycan precursors employed in protein asparagine (N)-glycosylation. The assembly of dolichol-linked oligosaccharides begins on the cytosolic side of the endoplasmic reticulum membrane and finishes in its lumen. The sequential addition of sugars to dolichol pyrophosphate produces dolichol-linked oligosaccharides containing fourteen sugars, including two GlcNAcs, nine mannoses and three glucoses. Once assembled, the oligosaccharide is transferred from the lipid to nascent proteins by oligosaccharyltransferases. In the lumen of the endoplasmic reticulum, catalyzes the addition of the seventh and ninth alpha-1,2-linked mannose residues to Man(6)GlcNAc(2)-PP-dolichol and Man(8)GlcNAc(2)-PP-dolichol respectively. In Homo sapiens (Human), this protein is Alpha-1,2-mannosyltransferase ALG9.